Consider the following 188-residue polypeptide: Peroxiredoxin y4vD (188 aa).

Residues 2–152 (PVKKRVPFVA…VEQWFEEEGF (151 aa)) form the Thioredoxin domain. The Cysteine sulfenic acid (-SOH) intermediate (for peroxiredoxin activity) role is filled by Cys56.

The protein belongs to the peroxiredoxin family. Prx5 subfamily. Monomer.

It carries out the reaction a hydroperoxide + 2 glutathione = an alcohol + glutathione disulfide + H2O. Functionally, thiol-specific peroxidase that catalyzes the reduction of hydrogen peroxide and organic hydroperoxides to water and alcohols, respectively. Plays a role in cell protection against oxidative stress by detoxifying peroxides. This chain is Peroxiredoxin y4vD, found in Sinorhizobium fredii (strain NBRC 101917 / NGR234).